The primary structure comprises 308 residues: Ribosomal RNA large subunit methyltransferase F (308 aa).

The protein belongs to the methyltransferase superfamily. METTL16/RlmF family.

It is found in the cytoplasm. It catalyses the reaction adenosine(1618) in 23S rRNA + S-adenosyl-L-methionine = N(6)-methyladenosine(1618) in 23S rRNA + S-adenosyl-L-homocysteine + H(+). Its function is as follows. Specifically methylates the adenine in position 1618 of 23S rRNA. This is Ribosomal RNA large subunit methyltransferase F from Escherichia coli (strain SMS-3-5 / SECEC).